Consider the following 314-residue polypeptide: tRNA-cytidine(32) 2-sulfurtransferase (314 aa).

The PP-loop motif signature appears at 39-44; it reads SGGKDS. Cysteine 114, cysteine 117, and cysteine 205 together coordinate [4Fe-4S] cluster.

This sequence belongs to the TtcA family. In terms of assembly, homodimer. Requires Mg(2+) as cofactor. [4Fe-4S] cluster serves as cofactor.

It is found in the cytoplasm. It catalyses the reaction cytidine(32) in tRNA + S-sulfanyl-L-cysteinyl-[cysteine desulfurase] + AH2 + ATP = 2-thiocytidine(32) in tRNA + L-cysteinyl-[cysteine desulfurase] + A + AMP + diphosphate + H(+). It functions in the pathway tRNA modification. In terms of biological role, catalyzes the ATP-dependent 2-thiolation of cytidine in position 32 of tRNA, to form 2-thiocytidine (s(2)C32). The sulfur atoms are provided by the cysteine/cysteine desulfurase (IscS) system. The polypeptide is tRNA-cytidine(32) 2-sulfurtransferase (Cupriavidus metallidurans (strain ATCC 43123 / DSM 2839 / NBRC 102507 / CH34) (Ralstonia metallidurans)).